The sequence spans 356 residues: Histidinol-phosphate aminotransferase (356 aa).

At Lys208 the chain carries N6-(pyridoxal phosphate)lysine.

This sequence belongs to the class-II pyridoxal-phosphate-dependent aminotransferase family. Histidinol-phosphate aminotransferase subfamily. As to quaternary structure, homodimer. The cofactor is pyridoxal 5'-phosphate.

It catalyses the reaction L-histidinol phosphate + 2-oxoglutarate = 3-(imidazol-4-yl)-2-oxopropyl phosphate + L-glutamate. It participates in amino-acid biosynthesis; L-histidine biosynthesis; L-histidine from 5-phospho-alpha-D-ribose 1-diphosphate: step 7/9. The protein is Histidinol-phosphate aminotransferase of Lactococcus lactis subsp. cremoris (strain SK11).